The chain runs to 283 residues: Protein canopy homolog 3 (283 aa).

The N-terminal stretch at 1 to 35 is a signal peptide; it reads MEPLPEPTSRPRLRPRPRCLLLLPLLLLLLLLLPA. Residues 55–276 enclose the Saposin B-type domain; the sequence is SKCEVCKYVA…EGIQKASPLT (222 aa). A glycan (N-linked (GlcNAc...) asparagine) is linked at asparagine 161. Residues 161–187 are a coiled coil; that stretch reads NETSAEVADLKKQCDVLVEEFEEVIED. The segment at 223–283 is disordered; it reads KGDTAALGGK…PLTHSPPDEL (61 aa).

It belongs to the canopy family. In terms of assembly, interacts with HSP90B1; this interaction is disrupted in the presence of ATP. Interacts with TLR1, TLR2, TLR4 and TLR9.

It is found in the endoplasmic reticulum. In terms of biological role, toll-like receptor (TLR)-specific co-chaperone for HSP90B1. Required for proper TLR folding, except that of TLR3, and hence controls TLR exit from the endoplasmic reticulum. Consequently, required for both innate and adaptive immune responses. This is Protein canopy homolog 3 (CNPY3) from Sus scrofa (Pig).